An 858-amino-acid polypeptide reads, in one-letter code: Piwi-like protein 1 (858 aa).

The segment covering 1 to 13 (MTGRARARSRGRG) has biased composition (basic residues). The interval 1-56 (MTGRARARSRGRGRGQEPAAPGAQPPVSQEAAKPVVSTPSEGQLVGRGRQKPAPGA) is disordered. Residues 16 to 26 (QEPAAPGAQPP) are compositionally biased toward low complexity. Positions 276–388 (TVLDFMYSLR…LVPEFCYLTG (113 aa)) constitute a PAZ domain. The interval 314–316 (TYR) is required for binding 2'-O-methylated 3'-end of piRNAs. The segment at 476 to 612 (SKEMRGLPLI…LQMNCKMGGE (137 aa)) is MID region. The region spanning 552 to 844 (MVVVILPTNR…LAFLVGQSIH (293 aa)) is the Piwi domain. Catalysis depends on residues aspartate 629, glutamate 667, aspartate 699, and histidine 833.

Belongs to the argonaute family. Piwi subfamily. Requires Mg(2+) as cofactor. Methylated on arginine residues; required for the interaction with Tudor domain-containing protein and subsequent localization to the meiotic nuage, also named P granule. Expressed exclusively in the adult gonads; expression in the ovary weaker than in the testis (at protein level). During neurogenesis and organogenesis, expression is detected in CNS (midbrain and eye) and fin buds. Starting from 24 hours post-fertilization, expression is found in the genital ridge.

Its subcellular location is the cytoplasm. Its function is as follows. Plays a central role during gametogenesis by repressing transposable elements and preventing their mobilization, which is essential for the germline integrity. Acts via the piRNA metabolic process, which mediates the repression of transposable elements during meiosis by forming complexes composed of piRNAs and Piwi proteins and governs the methylation and subsequent repression of transposons. Directly binds methylated piRNAs, a class of 24 to 30 nucleotide RNAs that are generated by a Dicer-independent mechanism and are primarily derived from transposons and other repeated sequence elements. Has a strong preference for piRNAs with a uridine nucleotide at their 5'-end (g1U preference, also named 1U-bias) and binds piRNAs in an opposite direction compared to piwil2/zili. Participates in a piRNA amplification loop with piwil2/zili. Not involved in the piRNA amplification loop, also named ping-pong amplification cycle. Acts as an endoribonuclease that cleaves transposon messenger RNAs. The protein is Piwi-like protein 1 (piwil1) of Danio rerio (Zebrafish).